The following is a 592-amino-acid chain: Hepatocyte nuclear factor 1-alpha-B (592 aa).

The interval 1-31 is dimerization; the sequence is MASQLSYLQQELLRALLESGVTKEALKKALA. Residues 1–32 enclose the HNF-p1 domain; the sequence is MASQLSYLQQELLRALLESGVTKEALKKALAD. The tract at residues 54-78 is disordered; that stretch reads NCVQLPNGLGEPQMSEDESSDDGGD. Positions 67-77 are enriched in acidic residues; that stretch reads MSEDESSDDGG. Positions 85 to 180 constitute a POU-specific atypical domain; sequence KELERLSPEE…IARQFTHAGH (96 aa). 6 interaction with DNA regions span residues 128–130, 141–147, 153–156, 201–204, 261–263, and 268–271; these read QRE, HLSQHLN, KTQK, RFKW, RVY, and NSGK. The Nuclear localization signal signature appears at 195–203; sequence KKMRRNRFK. The homeobox; HNF1-type DNA-binding region spans 197–277; it reads MRRNRFKWGP…NSGKEEAFRH (81 aa). Composition is skewed to polar residues over residues 284-295 and 306-328; these read YNGQQSSAQPLS and RYTQ…TLSP. Disordered stretches follow at residues 284 to 329 and 511 to 533; these read YNGQ…LSPS and KQVV…HNQD.

It belongs to the HNF1 homeobox family. Binds DNA as dimer. Forms a homodimer or heterodimer with HNF1-alpha-A. Potentially also form a heterodimer with HNF1-beta. As to expression, liver.

The protein resides in the nucleus. In terms of biological role, transcriptional activator that regulates the tissue specific expression of multiple genes, especially in pancreas and liver. Binds to the hepatocyte specific promoter element HP1. Binds to the inverted palindrome 5'-GTTAATNATTAAC-3'. The protein is Hepatocyte nuclear factor 1-alpha-B (hnf1a-b) of Xenopus laevis (African clawed frog).